Consider the following 779-residue polypeptide: Pre-mRNA-splicing factor cef-1 (779 aa).

2 consecutive HTH myb-type domains span residues 1-56 (MPVV…DPSI) and 57-106 (KKIE…DEAE). 2 consecutive DNA-binding regions (H-T-H motif) follow at residues 29–52 (WARVSSLLARKTPKQCKARWNEWL) and 80–102 (WRTIAPIVGRTANQCLERYQRLL). Disordered stretches follow at residues 113–192 (LGLT…ESRR), 246–284 (EYQRAHFDPKKQQVGNKRKGEEDERDGKRRKGDKDPSVQ), 424–448 (TPLRAAGAGPGATPLRVGQTPLRTP), and 497–525 (WELELPDDQQEPKTAEQLEEDAAERDRRE). Positions 127 to 152 (SADDVRKLRPGEVDPDPETKPARPDT) are enriched in basic and acidic residues. Residues 157-204 (EDEKEMLSEARARLANTQGKKAKRKARERQQEESRRLAALQKRRELKT) are a coiled coil. Basic and acidic residues-rich tracts occupy residues 246-256 (EYQRAHFDPKK) and 263-281 (RKGEEDERDGKRRKGDKDP). Residues 653-772 (DEEEEQISTM…EELDALTLNG (120 aa)) adopt a coiled-coil conformation.

It belongs to the CEF1 family. Associated with the spliceosome.

The protein resides in the cytoplasm. It localises to the nucleus. In terms of biological role, involved in pre-mRNA splicing and cell cycle control. The polypeptide is Pre-mRNA-splicing factor cef-1 (cef-1) (Neurospora crassa (strain ATCC 24698 / 74-OR23-1A / CBS 708.71 / DSM 1257 / FGSC 987)).